The sequence spans 338 residues: RNA 3'-terminal phosphate cyclase (338 aa).

ATP is bound by residues Gln103 and 283–287; that span reads YLADQ. Catalysis depends on His308, which acts as the Tele-AMP-histidine intermediate.

It belongs to the RNA 3'-terminal cyclase family. Type 1 subfamily.

It is found in the cytoplasm. The catalysed reaction is a 3'-end 3'-phospho-ribonucleotide-RNA + ATP = a 3'-end 2',3'-cyclophospho-ribonucleotide-RNA + AMP + diphosphate. In terms of biological role, catalyzes the conversion of 3'-phosphate to a 2',3'-cyclic phosphodiester at the end of RNA. The mechanism of action of the enzyme occurs in 3 steps: (A) adenylation of the enzyme by ATP; (B) transfer of adenylate to an RNA-N3'P to produce RNA-N3'PP5'A; (C) and attack of the adjacent 2'-hydroxyl on the 3'-phosphorus in the diester linkage to produce the cyclic end product. The biological role of this enzyme is unknown but it is likely to function in some aspects of cellular RNA processing. The chain is RNA 3'-terminal phosphate cyclase from Shigella boydii serotype 4 (strain Sb227).